The sequence spans 488 residues: Multidrug resistance outer membrane protein MdtP (488 aa).

The N-terminal stretch at 1 to 23 (MINRQLSRLLLCSILGSTTLISG) is a signal peptide. C24 carries N-palmitoyl cysteine lipidation. C24 carries S-diacylglycerol cysteine lipidation.

The protein belongs to the outer membrane factor (OMF) (TC 1.B.17) family. Could be part of a tripartite efflux system composed of MdtN, MdtO and MdtP.

The protein resides in the cell outer membrane. Its function is as follows. Could be involved in resistance to puromycin, acriflavine and tetraphenylarsonium chloride. The sequence is that of Multidrug resistance outer membrane protein MdtP (mdtP) from Escherichia coli O157:H7.